Reading from the N-terminus, the 1375-residue chain is uncharacterized protein (1375 aa).

The region spanning 277 to 476 (LLASGDIRGG…FGLLFLLRYS (200 aa)) is the Helicase ATP-binding domain. 290-297 (DEMGMGKT) provides a ligand contact to ATP. The RING-type zinc finger occupies 1092-1130 (CIICRDIIKQGFITTCGHLYCSFCLEAWLKHSSSCPMCK). A Helicase C-terminal domain is found at 1190 to 1336 (TISKHLLYLK…QLDKLGLDVP (147 aa)).

It belongs to the SNF2/RAD54 helicase family.

The protein localises to the nucleus. This is an uncharacterized protein from Schizosaccharomyces pombe (strain 972 / ATCC 24843) (Fission yeast).